We begin with the raw amino-acid sequence, 120 residues long: Large ribosomal subunit protein uL14 (120 aa).

This sequence belongs to the universal ribosomal protein uL14 family. As to quaternary structure, part of the 50S ribosomal subunit. Forms a cluster with proteins L3 and L19. In the 70S ribosome, L14 and L19 interact and together make contacts with the 16S rRNA in bridges B5 and B8.

Functionally, binds to 23S rRNA. Forms part of two intersubunit bridges in the 70S ribosome. This chain is Large ribosomal subunit protein uL14, found in Karelsulcia muelleri (strain GWSS) (Sulcia muelleri).